We begin with the raw amino-acid sequence, 338 residues long: Ketol-acid reductoisomerase (NADP(+)) (338 aa).

The 181-residue stretch at 1–181 folds into the KARI N-terminal Rossmann domain; it reads MKVFYDKDCD…GGGKAGIIET (181 aa). NADP(+) is bound by residues 24–27, Arg-47, and Ser-52; that span reads YGSQ. Residue His-107 is part of the active site. An NADP(+)-binding site is contributed by Gly-133. The region spanning 182 to 327 is the KARI C-terminal knotted domain; sequence NFKEETETDL…AQLRAMMPWI (146 aa). Residues Asp-190, Glu-194, Glu-226, and Glu-230 each coordinate Mg(2+). Position 251 (Ser-251) interacts with substrate.

This sequence belongs to the ketol-acid reductoisomerase family. Requires Mg(2+) as cofactor.

The catalysed reaction is (2R)-2,3-dihydroxy-3-methylbutanoate + NADP(+) = (2S)-2-acetolactate + NADPH + H(+). It carries out the reaction (2R,3R)-2,3-dihydroxy-3-methylpentanoate + NADP(+) = (S)-2-ethyl-2-hydroxy-3-oxobutanoate + NADPH + H(+). The protein operates within amino-acid biosynthesis; L-isoleucine biosynthesis; L-isoleucine from 2-oxobutanoate: step 2/4. It participates in amino-acid biosynthesis; L-valine biosynthesis; L-valine from pyruvate: step 2/4. Its function is as follows. Involved in the biosynthesis of branched-chain amino acids (BCAA). Catalyzes an alkyl-migration followed by a ketol-acid reduction of (S)-2-acetolactate (S2AL) to yield (R)-2,3-dihydroxy-isovalerate. In the isomerase reaction, S2AL is rearranged via a Mg-dependent methyl migration to produce 3-hydroxy-3-methyl-2-ketobutyrate (HMKB). In the reductase reaction, this 2-ketoacid undergoes a metal-dependent reduction by NADPH to yield (R)-2,3-dihydroxy-isovalerate. In Acidovorax ebreus (strain TPSY) (Diaphorobacter sp. (strain TPSY)), this protein is Ketol-acid reductoisomerase (NADP(+)).